The chain runs to 160 residues: Putative tRNA (cytidine(34)-2'-O)-methyltransferase (160 aa).

4 residues coordinate S-adenosyl-L-methionine: Ile82, Gly107, Leu128, and Ser136.

Belongs to the class IV-like SAM-binding methyltransferase superfamily. RNA methyltransferase TrmH family. TrmL subfamily.

It localises to the cytoplasm. The catalysed reaction is cytidine(34) in tRNA + S-adenosyl-L-methionine = 2'-O-methylcytidine(34) in tRNA + S-adenosyl-L-homocysteine + H(+). It carries out the reaction 5-carboxymethylaminomethyluridine(34) in tRNA(Leu) + S-adenosyl-L-methionine = 5-carboxymethylaminomethyl-2'-O-methyluridine(34) in tRNA(Leu) + S-adenosyl-L-homocysteine + H(+). In terms of biological role, could methylate the ribose at the nucleotide 34 wobble position in tRNA. The protein is Putative tRNA (cytidine(34)-2'-O)-methyltransferase (cspR) of Bacillus subtilis (strain 168).